The following is a 251-amino-acid chain: Cell division protein ZapD (251 aa).

It belongs to the ZapD family. Interacts with FtsZ.

The protein resides in the cytoplasm. Functionally, cell division factor that enhances FtsZ-ring assembly. Directly interacts with FtsZ and promotes bundling of FtsZ protofilaments, with a reduction in FtsZ GTPase activity. This is Cell division protein ZapD from Burkholderia thailandensis (strain ATCC 700388 / DSM 13276 / CCUG 48851 / CIP 106301 / E264).